We begin with the raw amino-acid sequence, 233 residues long: Phosphoglycolate phosphatase (233 aa).

The active-site Nucleophile is aspartate 9. Positions 9 and 11 each coordinate Mg(2+). Lysine 154 contributes to the substrate binding site. Positions 177 and 181 each coordinate Mg(2+).

It belongs to the archaeal SPP-like hydrolase family. Mg(2+) serves as cofactor.

It catalyses the reaction 2-phosphoglycolate + H2O = glycolate + phosphate. Catalyzes the dephosphorylation of 2-phosphoglycolate. In Pyrococcus abyssi (strain GE5 / Orsay), this protein is Phosphoglycolate phosphatase.